Consider the following 511-residue polypeptide: Myrosinase 5 (511 aa).

An N-terminal signal peptide occupies residues 1–23; sequence MAIPKAHYSLAVLVLLFVVVSSS. 3 disulfide bridges follow: Cys31-Cys450, Cys39-Cys445, and Cys230-Cys233. N-linked (GlcNAc...) asparagine glycans are attached at residues Asn46 and Asn53. Residues Gln64, His165, and 210–211 contribute to the a beta-D-glucoside site; that span reads NQ. A glycan (N-linked (GlcNAc...) asparagine) is linked at Asn222. Positions 351 and 418 each coordinate a beta-D-glucoside. The active-site Nucleophile is the Glu418. Residue Asn428 is glycosylated (N-linked (GlcNAc...) asparagine). Residues Trp467, 474–475, and Phe483 contribute to the a beta-D-glucoside site; that span reads EF. N-linked (GlcNAc...) asparagine glycosylation is present at Asn489.

This sequence belongs to the glycosyl hydrolase 1 family. As to expression, specifically expressed in roots.

The catalysed reaction is a thioglucoside + H2O = a sugar + a thiol.. It catalyses the reaction Hydrolysis of terminal, non-reducing beta-D-glucosyl residues with release of beta-D-glucose.. Hydrolyzes sinigrin and, with lower efficiency, p-nitrophenyl beta-D-glucoside. In Arabidopsis thaliana (Mouse-ear cress), this protein is Myrosinase 5.